The sequence spans 343 residues: Heat-inducible transcription repressor HrcA (343 aa).

The protein belongs to the HrcA family.

Its function is as follows. Negative regulator of class I heat shock genes (grpE-dnaK-dnaJ and groELS operons). Prevents heat-shock induction of these operons. The protein is Heat-inducible transcription repressor HrcA of Mycobacterium leprae (strain Br4923).